We begin with the raw amino-acid sequence, 89 residues long: UPF0213 protein LSEI_1587 (89 aa).

The 76-residue stretch at 4 to 79 (KTYYFYVLLC…KHQTRHRKEV (76 aa)) folds into the GIY-YIG domain.

The protein belongs to the UPF0213 family.

The protein is UPF0213 protein LSEI_1587 of Lacticaseibacillus paracasei (strain ATCC 334 / BCRC 17002 / CCUG 31169 / CIP 107868 / KCTC 3260 / NRRL B-441) (Lactobacillus paracasei).